Consider the following 320-residue polypeptide: Mycothiol acetyltransferase (320 aa).

2 N-acetyltransferase domains span residues 16 to 141 (RQVR…RSLR) and 152 to 320 (LQIR…AALA). Residue Glu36 participates in 1D-myo-inositol 2-(L-cysteinylamino)-2-deoxy-alpha-D-glucopyranoside binding. Residues 80-82 (LVV) and 88-93 (RRGIAT) each bind acetyl-CoA. Residues Glu179, Lys229, and Glu239 each coordinate 1D-myo-inositol 2-(L-cysteinylamino)-2-deoxy-alpha-D-glucopyranoside. Residues 243–245 (LGV) and 250–256 (QGRGLGR) contribute to the acetyl-CoA site. Residue Tyr284 participates in 1D-myo-inositol 2-(L-cysteinylamino)-2-deoxy-alpha-D-glucopyranoside binding. Residue 289–294 (NIAAVR) coordinates acetyl-CoA.

The protein belongs to the acetyltransferase family. MshD subfamily. Monomer.

It carries out the reaction 1D-myo-inositol 2-(L-cysteinylamino)-2-deoxy-alpha-D-glucopyranoside + acetyl-CoA = mycothiol + CoA + H(+). Its function is as follows. Catalyzes the transfer of acetyl from acetyl-CoA to desacetylmycothiol (Cys-GlcN-Ins) to form mycothiol. This Mycobacterium marinum (strain ATCC BAA-535 / M) protein is Mycothiol acetyltransferase.